Consider the following 207-residue polypeptide: MTTAAFTPWILGLTGGIGSGKSAAAERFVELGVHLVDADQAARWVVEPGRPALASIVERFGPGVLLDDGQLDRAALRQLIFADPAQRQWLEALLHPLIGQEIFSYLAKAESPYAVYVSPLLIESGQYRKTQRVLVIDAPQALQMERTLQRDNTSPEQVQAILNAQLAREERLRHADDVVVNDRDLAALHEQIDRLHHFYLTLRGGQP.

Residues 10–207 (ILGLTGGIGS…FYLTLRGGQP (198 aa)) enclose the DPCK domain. ATP is bound at residue 18-23 (GSGKSA).

The protein belongs to the CoaE family.

The protein resides in the cytoplasm. The enzyme catalyses 3'-dephospho-CoA + ATP = ADP + CoA + H(+). It participates in cofactor biosynthesis; coenzyme A biosynthesis; CoA from (R)-pantothenate: step 5/5. Its function is as follows. Catalyzes the phosphorylation of the 3'-hydroxyl group of dephosphocoenzyme A to form coenzyme A. The protein is Dephospho-CoA kinase of Pseudomonas putida (Arthrobacter siderocapsulatus).